Reading from the N-terminus, the 433-residue chain is Glutamate-1-semialdehyde 2,1-aminomutase (433 aa).

An N6-(pyridoxal phosphate)lysine modification is found at Lys-269.

Belongs to the class-III pyridoxal-phosphate-dependent aminotransferase family. HemL subfamily. As to quaternary structure, homodimer. Pyridoxal 5'-phosphate is required as a cofactor.

The protein resides in the cytoplasm. It carries out the reaction (S)-4-amino-5-oxopentanoate = 5-aminolevulinate. The protein operates within porphyrin-containing compound metabolism; protoporphyrin-IX biosynthesis; 5-aminolevulinate from L-glutamyl-tRNA(Glu): step 2/2. The polypeptide is Glutamate-1-semialdehyde 2,1-aminomutase (Francisella philomiragia subsp. philomiragia (strain ATCC 25017 / CCUG 19701 / FSC 153 / O#319-036)).